The primary structure comprises 263 residues: Bradykinin-potentiating and C-type natriuretic peptides (263 aa).

The first 23 residues, 1–23, serve as a signal peptide directing secretion; sequence MFVSRLAASGLLLLALMALSLDG. The propeptide occupies 24–30; the sequence is KPVQQWS. Position 31 is a pyrrolidone carboxylic acid (Gln-31). Residues 42–48 constitute a propeptide that is removed on maturation; the sequence is LVVQQWS. Gln-49 is subject to Pyrrolidone carboxylic acid. A propeptide spanning residues 60 to 66 is cleaved from the precursor; the sequence is LVVQQWS. The residue at position 67 (Gln-67) is a Pyrrolidone carboxylic acid. Residues 78–84 constitute a propeptide that is removed on maturation; that stretch reads LVVQQWS. Position 85 is a pyrrolidone carboxylic acid (Gln-85). The angiotensin-converting enzyme active site binding stretch occupies residues 89–95; that stretch reads PRPKIPP. Residues 96-102 constitute a propeptide that is removed on maturation; the sequence is LVVQQWS. A Pyrrolidone carboxylic acid modification is found at Gln-103. The interval 107-113 is angiotensin-converting enzyme active site binding; it reads PRPKIPP. A propeptide spanning residues 114–116 is cleaved from the precursor; it reads LVV. A Pyrrolidone carboxylic acid modification is found at Gln-117. A propeptide spanning residues 128–130 is cleaved from the precursor; sequence LLL. Gln-131 carries the post-translational modification Pyrrolidone carboxylic acid. Positions 137 to 241 are excised as a propeptide; the sequence is AGGTTALREE…ARRLKGLVKK (105 aa). 2 disordered regions span residues 152–171 and 177–205; these read EAASGPAAAGADGGRSGSKA and RLSKSKGASATSASASRPMRDLRTDGKQA. Positions 181 to 192 are enriched in low complexity; it reads SKGASATSASAS. Positions 194–204 are enriched in basic and acidic residues; the sequence is PMRDLRTDGKQ. Cys-247 and Cys-263 are disulfide-bonded.

In the N-terminal section; belongs to the bradykinin-potentiating peptide family. The protein in the C-terminal section; belongs to the natriuretic peptide family. In terms of tissue distribution, expressed by the venom gland.

It is found in the secreted. Inhibits the rabbit lung angiotensin-converting enzyme (ACE) (IC(50)=15 uM). Contracts the rat gastric fundus smooth muscle in a rapid and transient manner. In terms of biological role, causes no contraction of the rat gastric fundus smooth muscle even at high concentrations. Causes very weak contraction of the isolated guinea pig ileum. Causes weak contraction on rat uterus. Functionally, inhibits the activity of the angiotensin-converting enzyme (ACE) by a preferential interaction with its C-domain (Ki=30 nM, IC(50)=1.1 uM). It binds ACE in a zinc-independent manner. Also potentiates the hypotensive effects of bradykinin. Causes high contraction of the isolated guinea pig ileum and weak contraction on rat uterus. Its function is as follows. Inhibits the activity of the angiotensin-converting enzyme (ACE) by interacting with the same potency to its C- and N-domains. Inhibits the rabbit lung angiotensin-converting enzyme (ACE) (IC(50)=7.1 uM). Causes weak contraction of the isolated guinea pig ileum. Causes weak contraction on rat uterus. Inhibits the rabbit lung angiotensin-converting enzyme (ACE) (IC(50)=46 uM). Synthetic Leu3-blomhotin contracts the rat gastric fundus smooth muscle in a rapid and transient manner. Causes moderate contraction of the isolated guinea pig ileum. Causes weak contraction on rat uterus. In terms of biological role, causes weak contraction of the isolated guinea pig ileum. Causes about 50-fold more potentiating activity on rat uterus than on guinea pig ileum. Functionally, synthetic peptide potentiates the bradykinin in vivo. Its function is as follows. Synthetic peptide does not show any bradykinin-potentiating effects. Has a vasorelaxant activity in rat aortic strips and a diuretic potency in anesthetized rats. May act by activating natriuretic receptors (NPR1 and/or NPR2). In Gloydius blomhoffii (Mamushi), this protein is Bradykinin-potentiating and C-type natriuretic peptides.